We begin with the raw amino-acid sequence, 796 residues long: Pleckstrin homology domain-containing family H member 3 (796 aa).

Positions 1-18 are cleaved as a signal peptide; the sequence is MPLPGGLWWLLCCRRGFT. The interval 28–71 is disordered; that stretch reads ELSGDGDEDEDDETFELRTPSPAGGGRGSLDVTLTQPTRNGPIS. Positions 29-41 are enriched in acidic residues; it reads LSGDGDEDEDDET. Position 30 is a phosphoserine (S30). Polar residues predominate over residues 59 to 68; that stretch reads VTLTQPTRNG. The region spanning 95–199 is the PH domain; it reads DIIVKGWLYR…WGVALREVIA (105 aa). Residues 237 to 399 enclose the MyTH4 domain; the sequence is HTSSALYAPL…PSLAEISALS (163 aa). An FERM domain is found at 404 to 757; sequence LLCTVHCPGA…ANPSPERPCR (354 aa). N474 carries N-linked (GlcNAc...) asparagine glycosylation. Disordered regions lie at residues 557 to 584 and 598 to 625; these read PLLD…PPSA and KRRA…GGAS. Over residues 563–583 the composition is skewed to pro residues; the sequence is LPPPIPPREQPPCPTRRPPPS. Residues 598 to 608 are compositionally biased toward basic residues; that stretch reads KRRAERARRGG. Omega-N-methylarginine is present on R638. Residues 750 to 796 form a disordered region; that stretch reads PSPERPCRSGSSSGPPSQDLPDTSPPSQHQVLEEPQGQSGCLKQLQD. Residues 757–766 show a composition bias toward low complexity; the sequence is RSGSSSGPPS. Positions 774–796 are enriched in polar residues; the sequence is PPSQHQVLEEPQGQSGCLKQLQD.

In Mus musculus (Mouse), this protein is Pleckstrin homology domain-containing family H member 3 (Plekhh3).